The following is a 37-amino-acid chain: Large ribosomal subunit protein bL36c (37 aa).

The protein belongs to the bacterial ribosomal protein bL36 family.

It localises to the plastid. The polypeptide is Large ribosomal subunit protein bL36c (Cuscuta reflexa (Southern Asian dodder)).